The chain runs to 254 residues: Thiazole synthase (254 aa).

Residue lysine 95 is the Schiff-base intermediate with DXP of the active site. Residues glycine 156, alanine 182–glycine 183, and asparagine 204–threonine 205 each bind 1-deoxy-D-xylulose 5-phosphate.

Belongs to the ThiG family. As to quaternary structure, homotetramer. Forms heterodimers with either ThiH or ThiS.

It localises to the cytoplasm. The enzyme catalyses [ThiS sulfur-carrier protein]-C-terminal-Gly-aminoethanethioate + 2-iminoacetate + 1-deoxy-D-xylulose 5-phosphate = [ThiS sulfur-carrier protein]-C-terminal Gly-Gly + 2-[(2R,5Z)-2-carboxy-4-methylthiazol-5(2H)-ylidene]ethyl phosphate + 2 H2O + H(+). The protein operates within cofactor biosynthesis; thiamine diphosphate biosynthesis. Functionally, catalyzes the rearrangement of 1-deoxy-D-xylulose 5-phosphate (DXP) to produce the thiazole phosphate moiety of thiamine. Sulfur is provided by the thiocarboxylate moiety of the carrier protein ThiS. In vitro, sulfur can be provided by H(2)S. This is Thiazole synthase from Shewanella baltica (strain OS195).